Reading from the N-terminus, the 252-residue chain is Neurexophilin-3 (252 aa).

The N-terminal stretch at M1 to G22 is a signal peptide. Residues Q23 to V75 are II. The interval P27 to P59 is disordered. Positions R45–P55 are enriched in basic residues. N62, N127, N137, and N143 each carry an N-linked (GlcNAc...) asparagine glycan. Residues W76–F157 form an III region. Positions H158–E166 are IV (linker domain). The interval A167–G252 is v (Cys-rich).

The protein belongs to the neurexophilin family. In terms of processing, may be proteolytically processed at the boundary between the N-terminal non-conserved and the central conserved domain in neuron-like cells. In terms of tissue distribution, brain. Detected in several other tissues.

It is found in the secreted. May be signaling molecules that resemble neuropeptides. Ligand for alpha-neurexins. The sequence is that of Neurexophilin-3 (Nxph3) from Rattus norvegicus (Rat).